The following is a 219-amino-acid chain: Octanoyltransferase (219 aa).

Residues serine 32–asparagine 207 form the BPL/LPL catalytic domain. Substrate is bound by residues arginine 71–histidine 78, serine 138–glycine 140, and glycine 151–alanine 153. The active-site Acyl-thioester intermediate is cysteine 169.

It belongs to the LipB family.

It localises to the cytoplasm. It catalyses the reaction octanoyl-[ACP] + L-lysyl-[protein] = N(6)-octanoyl-L-lysyl-[protein] + holo-[ACP] + H(+). It participates in protein modification; protein lipoylation via endogenous pathway; protein N(6)-(lipoyl)lysine from octanoyl-[acyl-carrier-protein]: step 1/2. Functionally, catalyzes the transfer of endogenously produced octanoic acid from octanoyl-acyl-carrier-protein onto the lipoyl domains of lipoate-dependent enzymes. Lipoyl-ACP can also act as a substrate although octanoyl-ACP is likely to be the physiological substrate. The chain is Octanoyltransferase from Shewanella woodyi (strain ATCC 51908 / MS32).